The primary structure comprises 232 residues: 5'-methylthioadenosine/S-adenosylhomocysteine nucleosidase (232 aa).

Glutamate 12 (proton acceptor) is an active-site residue. Substrate contacts are provided by residues glycine 78, isoleucine 152, and 173–174; that span reads ME. Aspartate 197 acts as the Proton donor in catalysis.

This sequence belongs to the PNP/UDP phosphorylase family. MtnN subfamily. Homodimer.

The catalysed reaction is S-adenosyl-L-homocysteine + H2O = S-(5-deoxy-D-ribos-5-yl)-L-homocysteine + adenine. It catalyses the reaction S-methyl-5'-thioadenosine + H2O = 5-(methylsulfanyl)-D-ribose + adenine. The enzyme catalyses 5'-deoxyadenosine + H2O = 5-deoxy-D-ribose + adenine. It participates in amino-acid biosynthesis; L-methionine biosynthesis via salvage pathway; S-methyl-5-thio-alpha-D-ribose 1-phosphate from S-methyl-5'-thioadenosine (hydrolase route): step 1/2. Its function is as follows. Catalyzes the irreversible cleavage of the glycosidic bond in both 5'-methylthioadenosine (MTA) and S-adenosylhomocysteine (SAH/AdoHcy) to adenine and the corresponding thioribose, 5'-methylthioribose and S-ribosylhomocysteine, respectively. Also cleaves 5'-deoxyadenosine, a toxic by-product of radical S-adenosylmethionine (SAM) enzymes, into 5-deoxyribose and adenine. Thus, is required for in vivo function of the radical SAM enzymes biotin synthase and lipoic acid synthase, that are inhibited by 5'-deoxyadenosine accumulation. This chain is 5'-methylthioadenosine/S-adenosylhomocysteine nucleosidase, found in Escherichia coli O9:H4 (strain HS).